The primary structure comprises 736 residues: Nucleoporin nup60 (736 aa).

Positions 1–46 are disordered; that stretch reads MSSGPIRTLHKGKAARNRTPYDRIAASKDGNHSNGPQTPSKSIFQR. The span at 19–31 shows a compositional bias: basic and acidic residues; sequence TPYDRIAASKDGN. Residues 32–43 show a composition bias toward polar residues; sequence HSNGPQTPSKSI. Residues serine 157, serine 159, serine 161, and serine 162 each carry the phosphoserine modification. Disordered stretches follow at residues 178–210, 295–321, 338–519, 565–614, and 647–701; these read RAAA…NSAK, DTSF…KTPS, TPSI…PNET, AVTD…RSLF, and EQAE…FPKF. 2 stretches are compositionally biased toward polar residues: residues 196 to 210 and 295 to 314; these read RTSS…NSAK and DTSF…TTAN. A compositionally biased stretch (basic and acidic residues) spans 375 to 397; the sequence is QIRPSSEKSEPEKKEPSAFETLE. The span at 456–473 shows a compositional bias: polar residues; it reads SATTDKPSPPVSSIFSFN. Low complexity-rich tracts occupy residues 474–505 and 573–587; these read APSA…TSFS and EVSS…TMIS. Over residues 588-597 the composition is skewed to polar residues; it reads QPNTGFSFGS. Over residues 664 to 692 the composition is skewed to basic and acidic residues; sequence EVEKPSAEGTNEHKQDATMTLEKTDKQGS.

Component of the nuclear pore complex (NPC). NPC constitutes the exclusive means of nucleocytoplasmic transport. NPCs allow the passive diffusion of ions and small molecules and the active, nuclear transport receptor-mediated bidirectional transport of macromolecules such as proteins, RNAs, ribonucleoparticles (RNPs), and ribosomal subunits across the nuclear envelope.

Its subcellular location is the nucleus. It is found in the nuclear pore complex. The protein resides in the nucleus membrane. Functions as a component of the nuclear pore complex (NPC). NPC components, collectively referred to as nucleoporins (NUPs), can play the role of both NPC structural components and of docking or interaction partners for transiently associated nuclear transport factors. Active directional transport is assured by both, a Phe-Gly (FG) repeat affinity gradient for these transport factors across the NPC and a transport cofactor concentration gradient across the nuclear envelope. This is Nucleoporin nup60 (nup60) from Schizosaccharomyces pombe (strain 972 / ATCC 24843) (Fission yeast).